We begin with the raw amino-acid sequence, 131 residues long: Transcription antitermination protein NusB (131 aa).

It belongs to the NusB family.

Involved in transcription antitermination. Required for transcription of ribosomal RNA (rRNA) genes. Binds specifically to the boxA antiterminator sequence of the ribosomal RNA (rrn) operons. The chain is Transcription antitermination protein NusB from Caldicellulosiruptor saccharolyticus (strain ATCC 43494 / DSM 8903 / Tp8T 6331).